The sequence spans 180 residues: MNKQLDLIKSSIKSIPNYPKEGIIFRDITSLTEIPEAFTATVNLIAEAFRHKGITKIIGTESRGFIFGAPVAVALGLPFILVRKPGKLPREVISQSYQLEYGEDKLEIHADAIQKGDNVLVIDDLLATGGTVEACIKLVNRLGGDVKHAAFVINLPDLGGGERLRKQGVEPFTLVDFAGH.

Belongs to the purine/pyrimidine phosphoribosyltransferase family. Homodimer.

It localises to the cytoplasm. It catalyses the reaction AMP + diphosphate = 5-phospho-alpha-D-ribose 1-diphosphate + adenine. It functions in the pathway purine metabolism; AMP biosynthesis via salvage pathway; AMP from adenine: step 1/1. Functionally, catalyzes a salvage reaction resulting in the formation of AMP, that is energically less costly than de novo synthesis. This Actinobacillus succinogenes (strain ATCC 55618 / DSM 22257 / CCUG 43843 / 130Z) protein is Adenine phosphoribosyltransferase.